A 350-amino-acid polypeptide reads, in one-letter code: Glyceraldehyde-3-phosphate dehydrogenase (350 aa).

Residues 10-11 (RI), aspartate 36, arginine 82, and serine 125 each bind NAD(+). Residues 161 to 163 (SCT), threonine 193, 222 to 223 (TG), and arginine 245 contribute to the D-glyceraldehyde 3-phosphate site. Cysteine 162 functions as the Nucleophile in the catalytic mechanism. Asparagine 331 contributes to the NAD(+) binding site.

The protein belongs to the glyceraldehyde-3-phosphate dehydrogenase family. Homotetramer.

The protein resides in the cytoplasm. The catalysed reaction is D-glyceraldehyde 3-phosphate + phosphate + NAD(+) = (2R)-3-phospho-glyceroyl phosphate + NADH + H(+). The protein operates within carbohydrate degradation; glycolysis; pyruvate from D-glyceraldehyde 3-phosphate: step 1/5. Catalyzes the oxidative phosphorylation of glyceraldehyde 3-phosphate (G3P) to 1,3-bisphosphoglycerate (BPG) using the cofactor NAD. The first reaction step involves the formation of a hemiacetal intermediate between G3P and a cysteine residue, and this hemiacetal intermediate is then oxidized to a thioester, with concomitant reduction of NAD to NADH. The reduced NADH is then exchanged with the second NAD, and the thioester is attacked by a nucleophilic inorganic phosphate to produce BPG. The chain is Glyceraldehyde-3-phosphate dehydrogenase (gap) from Treponema pallidum (strain Nichols).